The primary structure comprises 3163 residues: Genome polyprotein (3163 aa).

Residues 219–362 (KMSDQGVDML…KTMSLKIVHF (144 aa)) enclose the Peptidase S30 domain. Active-site for P1 proteinase activity residues include histidine 270, aspartate 279, and serine 313. Residues 414–417 (KITC) carry the Involved in interaction with stylet and aphid transmission motif. Positions 672–674 (PTK) match the Involved in virions binding and aphid transmission motif. The Peptidase C6 domain maps to 698–820 (MYIAKEGYCY…ESSLKHYRVG (123 aa)). Catalysis depends on for helper component proteinase activity residues cysteine 706 and histidine 779. In terms of domain architecture, Helicase ATP-binding spans 1300–1452 (KIAHESDKDI…TQYPVSISTE (153 aa)). 1313-1320 (GAVGSGKS) serves as a coordination point for ATP. The DEAH box signature appears at 1402 to 1405 (DECH). The Helicase C-terminal domain occupies 1471-1630 (DVISKGDNIL…GLPVITNNVS (160 aa)). Residues 1871–1888 (STNEMSKFLQLKGKWNKT) are Cytoplasmic-facing. The helical transmembrane segment at 1889–1909 (LITRDVLVICGVLGGGVWMVV) threads the bilayer. At 1910–1923 (QHFRSKVSEPVTHE) the chain is on the lumenal side. Residues 1964 to 1971 (KKGKSKGR) carry the Nuclear localization signal motif. The binding to host eIF(iso)4E stretch occupies residues 1983 to 2017 (INMYGFDPEDFSAVRFVDPLTGATLDDNPFTDITL). O-(5'-phospho-RNA)-tyrosine is present on tyrosine 1986. One can recognise a Peptidase C4 domain in the interval 2116 to 2334 (SNSMFRGLRD…ISWGSLNIQA (219 aa)). Active-site for nuclear inclusion protein A activity residues include histidine 2161, aspartate 2196, and cysteine 2266. The 125-residue stretch at 2600 to 2724 (WVYCDADGSQ…SVHPEYEYIL (125 aa)) folds into the RdRp catalytic domain. The disordered stretch occupies residues 2883 to 2934 (DLTEEQKQAEKEKKEREKAEKERERQKQLAFKKGKDVAQEEGKRDKEVNAGT). Positions 2886-2930 (EEQKQAEKEKKEREKAEKERERQKQLAFKKGKDVAQEEGKRDKEV) are enriched in basic and acidic residues.

The protein belongs to the potyviridae genome polyprotein family. Interacts with host eIF4E protein (via cap-binding region); this interaction mediates the translation of the VPg-viral RNA conjugates. Part of a complex that comprises VPg, RNA, host EIF4E and EIF4G; this interaction mediates the translation of the VPg-viral RNA conjugates. In terms of assembly, interacts, via N-terminal region, with host Sec24a protein in COPII-coated vesicles. This binding triggers the formation of host endoplasmic reticulum (ER)-derived viral vesicles involved in cell-to-cell viral movement. Post-translationally, VPg is uridylylated by the polymerase and is covalently attached to the 5'-end of the genomic RNA. This uridylylated form acts as a nucleotide-peptide primer for the polymerase. Potyviral RNA is expressed as two polyproteins which undergo post-translational proteolytic processing. Genome polyprotein is processed by NIa-pro, P1 and HC-pro proteinases resulting in the production of at least ten individual proteins. P3N-PIPO polyprotein is cleaved by P1 and HC-pro proteinases resulting in the production of three individual proteins. The P1 proteinase and the HC-pro cleave only their respective C-termini autocatalytically. 6K1 is essential for proper proteolytic separation of P3 from CI.

It localises to the host cytoplasm. The protein resides in the host nucleus. It is found in the host cytoplasmic vesicle. The protein localises to the host membrane. Its subcellular location is the virion. It catalyses the reaction RNA(n) + a ribonucleoside 5'-triphosphate = RNA(n+1) + diphosphate. The catalysed reaction is Hydrolyzes glutaminyl bonds, and activity is further restricted by preferences for the amino acids in P6 - P1' that vary with the species of potyvirus, e.g. Glu-Xaa-Xaa-Tyr-Xaa-Gln-|-(Ser or Gly) for the enzyme from tobacco etch virus. The natural substrate is the viral polyprotein, but other proteins and oligopeptides containing the appropriate consensus sequence are also cleaved.. The enzyme catalyses Hydrolyzes a Gly-|-Gly bond at its own C-terminus, commonly in the sequence -Tyr-Xaa-Val-Gly-|-Gly, in the processing of the potyviral polyprotein.. Cysteine protease that cleaves a Gly-Gly dipeptide at its own C-terminus. Required for aphid transmission and also has proteolytic activity. Interacts with virions and aphid stylets. Acts as a suppressor of RNA-mediated gene silencing, also known as post-transcriptional gene silencing (PTGS), a mechanism of plant viral defense that limits the accumulation of viral RNAs. May have RNA-binding activity. Functionally, has helicase activity. It may be involved in replication. In terms of biological role, indispensable for virus replication. Its function is as follows. Responsible for the formation of peripheral motile host endoplasmic reticulum (ER)-derived viral vesicles called 'viral factories', seat of the viral RNA (vRNA) replication and carrying vRNA to plasmodesmata for delivery into adjacent non-infected cells; this process relies on host Sec24a-binding. Mediates the cap-independent, EIF4E-dependent translation of viral genomic RNAs. Binds to the cap-binding site of host EIF4E and thus interferes with the host EIF4E-dependent mRNA export and translation. VPg-RNA directly binds EIF4E and is a template for transcription. Also forms trimeric complexes with EIF4E-EIF4G, which are templates for translation. Functionally, has RNA-binding and proteolytic activities. In terms of biological role, RNA-dependent RNA polymerase that ensures transcription and replication of viral RNA (vRNA). Its function is as follows. Involved in aphid transmission, cell-to-cell and systemis movement, encapsidation of the viral RNA and in the regulation of viral RNA amplification. This Brassica (TuMV) protein is Genome polyprotein.